The following is a 340-amino-acid chain: Delta-aminolevulinic acid dehydratase (340 aa).

The Zn(2+) site is built by C133, C135, and C143. K210 serves as the catalytic Schiff-base intermediate with substrate. R220 and R232 together coordinate 5-aminolevulinate. Catalysis depends on K263, which acts as the Schiff-base intermediate with substrate. 5-aminolevulinate contacts are provided by S290 and Y329.

This sequence belongs to the ALAD family. Homooctamer. The cofactor is Zn(2+).

It catalyses the reaction 2 5-aminolevulinate = porphobilinogen + 2 H2O + H(+). The protein operates within porphyrin-containing compound metabolism; protoporphyrin-IX biosynthesis; coproporphyrinogen-III from 5-aminolevulinate: step 1/4. Catalyzes an early step in the biosynthesis of tetrapyrroles. Binds two molecules of 5-aminolevulinate per subunit, each at a distinct site, and catalyzes their condensation to form porphobilinogen. The polypeptide is Delta-aminolevulinic acid dehydratase (HEM2) (Candida glabrata (strain ATCC 2001 / BCRC 20586 / JCM 3761 / NBRC 0622 / NRRL Y-65 / CBS 138) (Yeast)).